The sequence spans 155 residues: SsrA-binding protein (155 aa).

Residues 132 to 147 (KRESIKRREQDRDIKR) are compositionally biased toward basic and acidic residues. A disordered region spans residues 132-155 (KRESIKRREQDRDIKRQMKQFNGR).

It belongs to the SmpB family.

It localises to the cytoplasm. Its function is as follows. Required for rescue of stalled ribosomes mediated by trans-translation. Binds to transfer-messenger RNA (tmRNA), required for stable association of tmRNA with ribosomes. tmRNA and SmpB together mimic tRNA shape, replacing the anticodon stem-loop with SmpB. tmRNA is encoded by the ssrA gene; the 2 termini fold to resemble tRNA(Ala) and it encodes a 'tag peptide', a short internal open reading frame. During trans-translation Ala-aminoacylated tmRNA acts like a tRNA, entering the A-site of stalled ribosomes, displacing the stalled mRNA. The ribosome then switches to translate the ORF on the tmRNA; the nascent peptide is terminated with the 'tag peptide' encoded by the tmRNA and targeted for degradation. The ribosome is freed to recommence translation, which seems to be the essential function of trans-translation. The protein is SsrA-binding protein of Streptococcus mutans serotype c (strain ATCC 700610 / UA159).